The sequence spans 208 residues: Frataxin, mitochondrial (208 aa).

The transit peptide at 1-40 (MWTFGRRAAAGLLPRTASRASAWVRNPRGRERIGTCGRRG) directs the protein to the mitochondrion.

Belongs to the frataxin family. In terms of assembly, component of the mitochondrial core iron-sulfur cluster (ISC) complex composed of NFS1, LYRM4, NDUFAB1, ISCU, FXN, and FDX2; this complex is a heterohexamer containing two copies of each monomer. Homodimer. Monomer (probable predominant form). Oligomer. Monomers and polymeric aggregates of &gt;1 MDa have been isolated from mitochondria. A small fraction of heterologous overexpressed recombinant frataxin forms high-molecular weight aggregates that incorporate iron. Interacts with LYRM4. Interacts (via ferrous form) with ISCU; the interaction is possible when both are bound to the dimeric form of the cysteine desulfurase complex (NFS1:LYRM4) and the interaction enhances FXN interaction to the dimeric form of the cysteine desulfurase complex (NFS1:LYRM4). Interacts with FECH; one iron-bound FXN monomer seems to interact with a FECH homodimer. Interacts with SDHA and SDHB. Interacts with ACO2; the interaction is dependent on citrate. Interacts with HSPA9. As to quaternary structure, interacts with ACO1. Interacts with ISCU (cytoplasmic form). In terms of processing, processed in two steps by mitochondrial processing peptidase (MPP). MPP first cleaves the precursor to intermediate form and subsequently converts the intermediate to yield frataxin mature form (frataxin(81-210)) which is the predominant form. The additional forms, frataxin(56-210) and frataxin(78-210), seem to be produced when the normal maturation process is impaired; their physiological relevance is unsure.

The protein resides in the mitochondrion. Its subcellular location is the cytoplasm. It is found in the cytosol. It carries out the reaction 4 Fe(2+) + O2 + 4 H(+) = 4 Fe(3+) + 2 H2O. Its function is as follows. Functions as an activator of persulfide transfer to the scaffoding protein ISCU as component of the core iron-sulfur cluster (ISC) assembly complex and participates to the [2Fe-2S] cluster assembly. Accelerates sulfur transfer from NFS1 persulfide intermediate to ISCU and to small thiols such as L-cysteine and glutathione leading to persulfuration of these thiols and ultimately sulfide release. Binds ferrous ion and is released from FXN upon the addition of both L-cysteine and reduced FDX2 during [2Fe-2S] cluster assembly. The core iron-sulfur cluster (ISC) assembly complex is involved in the de novo synthesis of a [2Fe-2S] cluster, the first step of the mitochondrial iron-sulfur protein biogenesis. This process is initiated by the cysteine desulfurase complex (NFS1:LYRM4:NDUFAB1) that produces persulfide which is delivered on the scaffold protein ISCU in a FXN-dependent manner. Then this complex is stabilized by FDX2 which provides reducing equivalents to accomplish the [2Fe-2S] cluster assembly. Finally, the [2Fe-2S] cluster is transferred from ISCU to chaperone proteins, including HSCB, HSPA9 and GLRX5. May play a role in the protection against iron-catalyzed oxidative stress through its ability to catalyze the oxidation of Fe(2+) to Fe(3+); the oligomeric form but not the monomeric form has in vitro ferroxidase activity. May be able to store large amounts of iron in the form of a ferrihydrite mineral by oligomerization; however, the physiological relevance is unsure as reports are conflicting and the function has only been shown using heterologous overexpression systems. May function as an iron chaperone protein that protects the aconitase [4Fe-4S]2+ cluster from disassembly and promotes enzyme reactivation. May play a role as a high affinity iron binding partner for FECH that is capable of both delivering iron to ferrochelatase and mediating the terminal step in mitochondrial heme biosynthesis. Functionally, modulates the RNA-binding activity of ACO1. May be involved in the cytoplasmic iron-sulfur protein biogenesis. May contribute to oxidative stress resistance and overall cell survival. This is Frataxin, mitochondrial from Rattus norvegicus (Rat).